A 123-amino-acid polypeptide reads, in one-letter code: Small ribosomal subunit protein uS12 (123 aa).

The protein belongs to the universal ribosomal protein uS12 family. As to quaternary structure, part of the 30S ribosomal subunit. Contacts proteins S8 and S17. May interact with IF1 in the 30S initiation complex.

Its function is as follows. With S4 and S5 plays an important role in translational accuracy. In terms of biological role, interacts with and stabilizes bases of the 16S rRNA that are involved in tRNA selection in the A site and with the mRNA backbone. Located at the interface of the 30S and 50S subunits, it traverses the body of the 30S subunit contacting proteins on the other side and probably holding the rRNA structure together. The combined cluster of proteins S8, S12 and S17 appears to hold together the shoulder and platform of the 30S subunit. The polypeptide is Small ribosomal subunit protein uS12 (Corynebacterium diphtheriae (strain ATCC 700971 / NCTC 13129 / Biotype gravis)).